The following is a 78-amino-acid chain: Probable [Fe-S]-dependent transcriptional repressor (78 aa).

Iron-sulfur cluster-binding residues include C56, C61, C64, and C70.

It belongs to the FeoC family.

May function as a transcriptional regulator that controls feoABC expression. This Escherichia coli O127:H6 (strain E2348/69 / EPEC) protein is Probable [Fe-S]-dependent transcriptional repressor.